The primary structure comprises 319 residues: Acetyl-coenzyme A carboxylase carboxyl transferase subunit alpha (319 aa).

One can recognise a CoA carboxyltransferase C-terminal domain in the interval 35-296 (DLDKEIKQLE…KQRLIEQLNE (262 aa)).

This sequence belongs to the AccA family. Acetyl-CoA carboxylase is a heterohexamer composed of biotin carboxyl carrier protein (AccB), biotin carboxylase (AccC) and two subunits each of ACCase subunit alpha (AccA) and ACCase subunit beta (AccD).

The protein resides in the cytoplasm. It catalyses the reaction N(6)-carboxybiotinyl-L-lysyl-[protein] + acetyl-CoA = N(6)-biotinyl-L-lysyl-[protein] + malonyl-CoA. It participates in lipid metabolism; malonyl-CoA biosynthesis; malonyl-CoA from acetyl-CoA: step 1/1. Functionally, component of the acetyl coenzyme A carboxylase (ACC) complex. First, biotin carboxylase catalyzes the carboxylation of biotin on its carrier protein (BCCP) and then the CO(2) group is transferred by the carboxyltransferase to acetyl-CoA to form malonyl-CoA. This Aliivibrio salmonicida (strain LFI1238) (Vibrio salmonicida (strain LFI1238)) protein is Acetyl-coenzyme A carboxylase carboxyl transferase subunit alpha.